A 401-amino-acid chain; its full sequence is Heparan-sulfate 6-O-sulfotransferase 1 (401 aa).

Residues 1–4 lie on the Cytoplasmic side of the membrane; it reads MVER. Residues 5 to 27 traverse the membrane as a helical; Signal-anchor for type II membrane protein segment; the sequence is ASKFVLVVAGSACFMLILYQYAG. Topologically, residues 28–401 are lumenal; it reads PGLSLGAPGG…DYMSHIIEKW (374 aa). 83-91 is a binding site for 3'-phosphoadenylyl sulfate; that stretch reads HIQKTGGTT. Residues 113-114, Arg130, Trp135, and His140 each bind substrate; that span reads KK. The active-site Proton acceptor is His140. 3'-phosphoadenylyl sulfate-binding residues include Arg175 and Ser183. Substrate contacts are provided by His187 and Trp194. Asn254 is a glycosylation site (N-linked (GlcNAc...) asparagine). 307-309 serves as a coordination point for 3'-phosphoadenylyl sulfate; that stretch reads MQY. Asn310 is a glycosylation site (N-linked (GlcNAc...) asparagine). 313-314 provides a ligand contact to 3'-phosphoadenylyl sulfate; it reads RA. Residues 367–389 are disordered; that stretch reads ERLLHRSKEALPREDTEEPGRVP.

Belongs to the sulfotransferase 6 family. In terms of processing, N-glycosylated.

The protein resides in the membrane. It catalyses the reaction alpha-D-glucosaminyl-[heparan sulfate](n) + 3'-phosphoadenylyl sulfate = 6-sulfo-alpha-D-glucosaminyl-[heparan sulfate](n) + adenosine 3',5'-bisphosphate + H(+). Inhibited by dithiothreitol and stimulated by protamine. Its function is as follows. 6-O-sulfation enzyme which catalyzes the transfer of sulfate from 3'-phosphoadenosine 5'-phosphosulfate (PAPS) to position 6 of the N-sulfoglucosamine residue (GlcNS) of heparan sulfate. Also transfers sulfate to CDSNS-heparin and performs the crucial step modification in the biosynthesis of anticoagulant heparan sulfate (HSact). Critical for normal neuronal development where it may play a role in neuron branching. May also play a role in limb development. May prefer iduronic acid. The protein is Heparan-sulfate 6-O-sulfotransferase 1 of Cricetulus griseus (Chinese hamster).